The chain runs to 450 residues: ATP-dependent protease ATPase subunit HslU (450 aa).

Residues V29, 71–76 (GVGKTE), D261, E328, and R400 contribute to the ATP site.

It belongs to the ClpX chaperone family. HslU subfamily. A double ring-shaped homohexamer of HslV is capped on each side by a ring-shaped HslU homohexamer. The assembly of the HslU/HslV complex is dependent on binding of ATP.

Its subcellular location is the cytoplasm. Its function is as follows. ATPase subunit of a proteasome-like degradation complex; this subunit has chaperone activity. The binding of ATP and its subsequent hydrolysis by HslU are essential for unfolding of protein substrates subsequently hydrolyzed by HslV. HslU recognizes the N-terminal part of its protein substrates and unfolds these before they are guided to HslV for hydrolysis. In Rickettsia peacockii (strain Rustic), this protein is ATP-dependent protease ATPase subunit HslU.